We begin with the raw amino-acid sequence, 142 residues long: Large ribosomal subunit protein uL11 (142 aa).

It belongs to the universal ribosomal protein uL11 family. As to quaternary structure, part of the ribosomal stalk of the 50S ribosomal subunit. Interacts with L10 and the large rRNA to form the base of the stalk. L10 forms an elongated spine to which L12 dimers bind in a sequential fashion forming a multimeric L10(L12)X complex. In terms of processing, one or more lysine residues are methylated.

Its function is as follows. Forms part of the ribosomal stalk which helps the ribosome interact with GTP-bound translation factors. The polypeptide is Large ribosomal subunit protein uL11 (Bradyrhizobium sp. (strain ORS 278)).